We begin with the raw amino-acid sequence, 145 residues long: Hemoglobin subunit beta (145 aa).

The 145-residue stretch at Met-1–His-145 folds into the Globin domain. Thr-11 carries the phosphothreonine modification. Lys-58 is modified (N6-acetyllysine). His-62 contributes to the heme b binding site. An N6-acetyllysine modification is found at Lys-81. A heme b-binding site is contributed by His-91. Cys-92 is subject to S-nitrosocysteine.

It belongs to the globin family. Heterotetramer of two alpha chains and two beta chains. In terms of tissue distribution, red blood cells.

Functionally, involved in oxygen transport from the lung to the various peripheral tissues. In Ovis aries musimon (Mouflon), this protein is Hemoglobin subunit beta (HBB).